Reading from the N-terminus, the 85-residue chain is U4-theraphotoxin-Hhn1p (85 aa).

The signal sequence occupies residues 1 to 22; it reads MKMTLIAIPTCAAVLVLHTTAA. Positions 23–48 are excised as a propeptide; the sequence is EELEAESQLMEVGMPDTELEAVDGER. 3 disulfide bridges follow: Cys-52–Cys-66, Cys-56–Cys-77, and Cys-71–Cys-82.

The protein belongs to the neurotoxin 12 (Hwtx-2) family. 02 (Hwtx-2) subfamily. In terms of tissue distribution, expressed by the venom gland.

The protein localises to the secreted. Functionally, postsynaptic neurotoxin. The chain is U4-theraphotoxin-Hhn1p from Cyriopagopus hainanus (Chinese bird spider).